A 193-amino-acid chain; its full sequence is Potassium-transporting ATPase KdpC subunit (193 aa).

Residues 8-28 (VVLLIFLTLITGVAYPLLATG) traverse the membrane as a helical segment.

Belongs to the KdpC family. In terms of assembly, the system is composed of three essential subunits: KdpA, KdpB and KdpC.

The protein localises to the cell inner membrane. Its function is as follows. Part of the high-affinity ATP-driven potassium transport (or Kdp) system, which catalyzes the hydrolysis of ATP coupled with the electrogenic transport of potassium into the cytoplasm. This subunit acts as a catalytic chaperone that increases the ATP-binding affinity of the ATP-hydrolyzing subunit KdpB by the formation of a transient KdpB/KdpC/ATP ternary complex. The polypeptide is Potassium-transporting ATPase KdpC subunit (Photorhabdus laumondii subsp. laumondii (strain DSM 15139 / CIP 105565 / TT01) (Photorhabdus luminescens subsp. laumondii)).